A 435-amino-acid chain; its full sequence is Maltodextrin transport system permease protein MdxF (435 aa).

The next 8 membrane-spanning stretches (helical) occupy residues 35–55 (LLFLAITGLFAFELCVFGIQA), 73–93 (FMLIEGTLQLIVTMIFLMFYI), 136–156 (AYIMMVFVIIFPVLVTLFVAL), 199–219 (VIWTICATTLQIILGIVTALF), 234–254 (IFLFPWAVPAFITIMSFSNMF), 293–313 (LIMIQTWLGFPYIYVMVTGVL), 337–357 (HITFPMILFATAPVMITQYTF), and 403–423 (VAAAVTLLISFIVIGISLIAF). Residues 195–422 (LGWTVIWTIC…FIVIGISLIA (228 aa)) enclose the ABC transmembrane type-1 domain.

This sequence belongs to the binding-protein-dependent transport system permease family. MalFG subfamily. In terms of assembly, the complex is composed of two ATP-binding proteins (MsmX), two transmembrane proteins (MdxF and MdxG) and a solute-binding protein (MdxE).

It localises to the cell membrane. Its function is as follows. Part of the ABC transporter complex involved in maltodextrin import. Probably responsible for the translocation of the substrate across the membrane. The protein is Maltodextrin transport system permease protein MdxF (mdxF) of Bacillus subtilis (strain 168).